Reading from the N-terminus, the 5100-residue chain is Hemicentin-2 (5100 aa).

Residues 1 to 19 form the signal peptide; sequence MTPGAQLLPLLVAISTAVA. The region spanning 37–211 is the VWFA domain; that stretch reads DATLAFVFDV…QVSEVLKWVE (175 aa). Residues N330, N347, N380, N479, N526, N548, and N675 are each glycosylated (N-linked (GlcNAc...) asparagine). Ig-like C2-type domains follow at residues 426–515, 517–601, 609–692, 699–782, 787–877, 882–968, 973–1058, 1063–1156, 1161–1239, 1246–1335, 1340–1437, 1442–1531, 1536–1624, 1629–1717, 1722–1810, 1825–1913, 1920–2008, 2011–2100, 2105–2189, 2196–2285, 2290–2379, 2384–2473, 2478–2566, 2571–2662, 2667–2758, 2781–2871, 2875–2964, 2971–3058, 3063–3153, 3157–3245, 3250–3340, 3345–3432, 3438–3523, 3528–3609, 3614–3702, 3707–3793, 3798–3886, 3891–3977, 3982–4067, 4071–4158, 4163–4244, 4252–4336, and 4343–4428; these read PGVP…IVIT, PPPQ…RATT, PQVS…ETVT, PSVS…IQLV, PRLT…LVVT, PQIA…VELV, PRIH…MWLS, PMIK…YVLR, PQVQ…WKLE, PHWG…AKLV, PSIR…FNLA, PSLL…FQLS, PTIW…TSLE, PTIE…YSVE, PQLL…VEVS, SAHH…KDVT, PNIE…LRVN, PRIT…VILQ, PSIL…KHFN, PAFP…QSLE, PQVT…FALS, PHLT…FSVE, PSIE…TQLS, PTIL…YHVE, PSIS…QDFN, PHEE…YELL, PPVI…KLFT, PQIS…VQLN, PSFK…FVLA, PPTF…FVVS, PQIQ…HTVN, PTIK…RNFT, PPIL…FQLT, PHIE…FRVR, PNVV…FRVE, PTIQ…LDLR, PAIA…YQVT, PTIA…MVLT, PVVK…TRLV, PPVI…VHLT, PVLT…QAVS, PVLQ…KVVT, and PVFQ…ALLA. The cysteines at positions 449 and 497 are disulfide-linked. Intrachain disulfides connect C539–C588, C630–C678, C720–C766, C808–C859, C903–C952, and C994–C1042. Omega-N-methylarginine is present on residues R909, R914, and R915. N-linked (GlcNAc...) asparagine glycosylation is found at N1024 and N1068. Disulfide bonds link C1091-C1140 and C1182-C1225. A glycan (N-linked (GlcNAc...) asparagine) is linked at N1264. A disordered region spans residues 1265–1293; sequence ASLPCPAQGTPKPRITWRRGPSSEPLNGR. Cysteines 1269 and 1319 form a disulfide. The N-linked (GlcNAc...) asparagine glycan is linked to N1350. 2 cysteine pairs are disulfide-bonded: C1363–C1421 and C1465–C1515. A glycan (N-linked (GlcNAc...) asparagine) is linked at N1542. 4 cysteine pairs are disulfide-bonded: C1559-C1608, C1653-C1701, C1745-C1794, and C1846-C1899. Residues N1676 and N1787 are each glycosylated (N-linked (GlcNAc...) asparagine). An N-linked (GlcNAc...) asparagine glycan is attached at N1934. 2 disulfides stabilise this stretch: C1941-C1990 and C2033-C2084. N-linked (GlcNAc...) asparagine glycans are attached at residues N2034, N2113, and N2119. Cystine bridges form between C2126–C2175 and C2218–C2269. N2309, N2315, N2345, and N2395 each carry an N-linked (GlcNAc...) asparagine glycan. Cysteines 2314 and 2363 form a disulfide. Cysteines 2408 and 2457 form a disulfide. Residues N2469, N2502, N2541, N2606, and N2688 are each glycosylated (N-linked (GlcNAc...) asparagine). 2 disulfide bridges follow: C2501/C2550 and C2597/C2646. Intrachain disulfides connect C2695-C2744 and C2806-C2855. N-linked (GlcNAc...) asparagine glycosylation is present at N2892. C2901 and C2950 are disulfide-bonded. Residue N2986 is glycosylated (N-linked (GlcNAc...) asparagine). Cystine bridges form between C2993–C3042, C3088–C3137, C3180–C3229, C3273–C3324, and C3369–C3418. The N-linked (GlcNAc...) asparagine glycan is linked to N3430. Cystine bridges form between C3462–C3507, C3551–C3593, and C3637–C3686. N-linked (GlcNAc...) asparagine glycans are attached at residues N3560 and N3575. N3717 and N3721 each carry an N-linked (GlcNAc...) asparagine glycan. An intrachain disulfide couples C3728 to C3777. N3806 is a glycosylation site (N-linked (GlcNAc...) asparagine). 7 cysteine pairs are disulfide-bonded: C3819–C3870, C3912–C3961, C4003–C4051, C4093–C4142, C4184–C4231, C4274–C4322, and C4364–C4412. The N-linked (GlcNAc...) asparagine glycan is linked to N4304. The Nidogen G2 beta-barrel domain occupies 4432-4654; sequence EPRGSRGSMT…QTEENEVGCP (223 aa). N4455 and N4601 each carry an N-linked (GlcNAc...) asparagine glycan. The 41-residue stretch at 4668–4708 folds into the EGF-like 1; calcium-binding domain; that stretch reads DKDECSGGPSPCSHTCRNAPGHFSCSCPTGFSLAWDHRNCR. Intrachain disulfides connect C4672–C4683, C4679–C4692, C4694–C4707, C4713–C4726, C4720–C4735, C4739–C4752, C4758–C4771, C4765–C4780, C4801–C4812, C4808–C4821, and C4823–C4836. An EGF-like 2; calcium-binding domain is found at 4709 to 4753; the sequence is DVDECAGNTHLCQEEQRCVNLLGSYNCLASCRPGFRVTADGSNCE. The EGF-like 3; calcium-binding domain occupies 4754–4789; it reads DVDECLEQLDECHYNQLCENTPGGHHCGCPRGYRQQ. The EGF-like 4; calcium-binding domain occupies 4797–4837; sequence DINECLQLPTPCVYQCQNLQGSYRCLCPPGQTLLRDGRTCI. Residue N4845 is glycosylated (N-linked (GlcNAc...) asparagine). Positions 4904 to 4943 constitute an EGF-like 5; calcium-binding domain; the sequence is DLDECRVRSLCQHACQNTEGSYYCLCPSGYRLLPSGKNCQ. Intrachain disulfides connect C4908-C4918, C4914-C4927, and C4929-C4942. N5035 is a glycosylation site (N-linked (GlcNAc...) asparagine).

Post-translationally, reported to be phosphorylated; however as this position is extracellular, the in vivo relevance is unsure. In neonatal skin, localized in the pericellular space of basal epidermal keratinocytes (at protein level). In adult skin, restricted to basal keratinocytes of hair follicles and the interfollicular epidermis. Absent from the myotendinous junction but present in skeletal muscle (at protein level). Expressed in the pericellular extracellular matrix of epithelial cells in a number of tissues including embryonic trophectoderm and adult skin and tongue. Also present in the extracellular matrix of some, but not all, blood vessels. Expressed primarily in epithelial cells in the embryonic epidermis, lung, intestine, skeletal hindlimb muscle, tongue and the muscular layers of the esophagus.

It is found in the secreted. It localises to the extracellular space. The protein resides in the extracellular matrix. Its subcellular location is the cleavage furrow. This Mus musculus (Mouse) protein is Hemicentin-2 (Hmcn2).